Consider the following 205-residue polypeptide: Small ribosomal subunit protein uS4 (205 aa).

A compositionally biased stretch (basic and acidic residues) spans 1–16; the sequence is MSKRETTKYKIDRRMG. A disordered region spans residues 1–46; that stretch reads MSKRETTKYKIDRRMGENIWGRPKSPVNRRDYGPGQHGQRRKGKLS. The region spanning 94 to 157 is the S4 RNA-binding domain; sequence SRLDAVIYRA…KQLVLVLESV (64 aa).

The protein belongs to the universal ribosomal protein uS4 family. As to quaternary structure, part of the 30S ribosomal subunit. Contacts protein S5. The interaction surface between S4 and S5 is involved in control of translational fidelity.

One of the primary rRNA binding proteins, it binds directly to 16S rRNA where it nucleates assembly of the body of the 30S subunit. In terms of biological role, with S5 and S12 plays an important role in translational accuracy. The protein is Small ribosomal subunit protein uS4 of Bartonella quintana (strain Toulouse) (Rochalimaea quintana).